Reading from the N-terminus, the 89-residue chain is Small ribosomal subunit protein bS20 (89 aa).

It belongs to the bacterial ribosomal protein bS20 family.

Its function is as follows. Binds directly to 16S ribosomal RNA. In Wolbachia sp. subsp. Drosophila simulans (strain wRi), this protein is Small ribosomal subunit protein bS20.